Here is a 264-residue protein sequence, read N- to C-terminus: Phosphoribosylaminoimidazole-succinocarboxamide synthase (264 aa).

The protein belongs to the SAICAR synthetase family.

The catalysed reaction is 5-amino-1-(5-phospho-D-ribosyl)imidazole-4-carboxylate + L-aspartate + ATP = (2S)-2-[5-amino-1-(5-phospho-beta-D-ribosyl)imidazole-4-carboxamido]succinate + ADP + phosphate + 2 H(+). It functions in the pathway purine metabolism; IMP biosynthesis via de novo pathway; 5-amino-1-(5-phospho-D-ribosyl)imidazole-4-carboxamide from 5-amino-1-(5-phospho-D-ribosyl)imidazole-4-carboxylate: step 1/2. The protein is Phosphoribosylaminoimidazole-succinocarboxamide synthase (purC) of Synechocystis sp. (strain ATCC 27184 / PCC 6803 / Kazusa).